The following is a 441-amino-acid chain: Putative cytochrome P450 138 (441 aa).

Cys388 serves as a coordination point for heme.

Belongs to the cytochrome P450 family. It depends on heme as a cofactor.

The chain is Putative cytochrome P450 138 (cyp138) from Mycobacterium bovis (strain ATCC BAA-935 / AF2122/97).